A 347-amino-acid chain; its full sequence is METSPISPMNEKNTAQPQQREENAQQILNTAIPFRQRSPGLLPEALKVGVRPDPANQIVETQEIEHPVAGFEGDSDQFQVSTNEMAEHLQASDLWYCPDGSFVKKIIVPGHGLDKPKLGSKCQVLALGFPFGSGMPEGWTELTIGIGQWREKMWGELMEKCLESMRQGEEAKIHLPGSSAPLAKLRLDSFTNGRDSWEMEAMEKEALAKEEHRRGTELFRAGNPQGAARCYGRALRLLLTLPPPGPPERTTLYANLAACQLLLGHPQLAAQSCDRVLEREPGHLKALYRRGVARAALGDLEKATADFKKVLAVDPKNRAAKEELGKVVIQGRKQDAGLARGLRKMFS.

The tract at residues 1–24 (METSPISPMNEKNTAQPQQREENA) is disordered. Thr-3 is subject to Phosphothreonine. TPR repeat units lie at residues 208–241 (AKEEHRRGTELFRAGNPQGAARCYGRALRLLLTL), 250–283 (TTLYANLAACQLLLGHPQLAAQSCDRVLEREPGH), and 284–317 (LKALYRRGVARAALGDLEKATADFKKVLAVDPKN).

In terms of assembly, forms a ternary complex with CDKN1A/p21 and HSP90AB1/Hsp90.

Its function is as follows. May be involved in response to X-ray. Regulates p21 protein stability by binding to Hsp90 and p21. This chain is FK506-binding protein-like (Fkbpl), found in Mus musculus (Mouse).